The primary structure comprises 689 residues: Transcription factor MYC2 (689 aa).

Residues 94–172 are JAZ-interaction domain; the sequence is LQQRLQALID…VLRELNSLIS (79 aa). Residues 316–349 show a composition bias toward polar residues; that stretch reads NTVQTNSVPSSNSNKQIAYGNENNHPSGNGQSCY. 2 disordered regions span residues 316–361 and 420–519; these read NTVQ…PQQQ and QSQF…EAER. Positions 350 to 361 are enriched in low complexity; it reads NQQQQKNPPQQQ. Residues 471-495 are compositionally biased toward basic and acidic residues; sequence DSEHSDLEASVVKEADSSRVVEPEK. The segment covering 496–505 has biased composition (basic residues); that stretch reads RPRKRGRKPA. The span at 506 to 519 shows a compositional bias: basic and acidic residues; it reads NGREEPLNHVEAER. Residues 509-522 are basic motif; degenerate; sequence EEPLNHVEAERQRR. The 50-residue stretch at 509–558 folds into the bHLH domain; sequence EEPLNHVEAERQRREKLNQRFYALRAVVPNVSKMDKASLLGDAISYINEL. The helix-loop-helix motif stretch occupies residues 523 to 558; sequence EKLNQRFYALRAVVPNVSKMDKASLLGDAISYINEL. Positions 563-602 are disordered; the sequence is QNTESDKEDLKSQIEDLKKESRRPGPPPPPNQDLKMSSHT. A compositionally biased stretch (basic and acidic residues) spans 566–585; the sequence is ESDKEDLKSQIEDLKKESRR.

As to quaternary structure, interacts (via N-terminus) with MED25. Interacts (via N-terminus) with JAZ7. MED25 and JAZ7 compete with each other to bind to MYC2. Interacts (via N-terminus) with MTB1. MTB1 and MED25 compete with each other to bind to MYC2. In terms of tissue distribution, expressed at low levels in roots, stems, leaves, flowers and fruits.

It is found in the nucleus. Its function is as follows. Transcriptional activator that binds to the G-box motif (5'-AACGTG-3') found in the promoter of the jasmonate-induced gene LAPA1. Acts as a negative regulator of blue light-mediated photomorphogenesis and positively regulates root growth. Promotes growth in response to the phytohormones abscisic acid (ABA) and jasmonate (JA). Binds to the G-box motif (5'-CACGTG-3') of the RBCS-3A gene promoter. Acts downstream of the jasmonate (JA) receptor to orchestrate JA-mediated activation of plant responses. Positively regulates both wound-responsive and pathogen-responsive genes through MYC2-targeted transcription factors (MTFs) involved in early response to JA. With JA2L forms a transcription module that regulates wounding-responsive genes. With ERF.C3 forms a transcription module that regulates pathogen-responsive genes. Plays a critical role in orchestrating JA-mediated defense gene expression during Botrytis cinerea infection. Negatively regulates defense responses to root-knot nematodes, potentially by mediating crosstalk among the hormones strigolactones, abscisic acid (ABA) and jasmonate (JA). Regulates the termination of JA-mediated defense responses by specifically binding the G-box (5'-CACATG-3') motifs in the promoters of MTB1, MTB2 and MTB3, which are transcription factors that negatively regulates JA signaling. May be involved in JA-induced chilling tolerance, possibly by ameliorating the antioxidant enzyme system of fruit and increasing proline and lycopene levels. This Solanum lycopersicum (Tomato) protein is Transcription factor MYC2.